The primary structure comprises 103 residues: Matrix Gla protein (103 aa).

The first 19 residues, 1–19 (MRSLLLLTVLAALVVAILC), serve as a signal peptide directing secretion. 4-carboxyglutamate is present on glutamate 21. A phosphoserine mark is found at serine 22, serine 25, and serine 28. Residues 51-97 (MAKAQERVREQRKPAYELNREACDDYKLCERYAMVYGYNAAYNRYFR) enclose the Gla domain. A 4-carboxyglutamate mark is found at glutamate 56, glutamate 60, glutamate 67, and glutamate 71. Cysteine 73 and cysteine 79 are oxidised to a cystine.

This sequence belongs to the osteocalcin/matrix Gla protein family. In terms of processing, requires vitamin K-dependent gamma-carboxylation for its function.

It is found in the secreted. Its function is as follows. Associates with the organic matrix of bone and cartilage. Thought to act as an inhibitor of bone formation. The sequence is that of Matrix Gla protein (MGP) from Oryctolagus cuniculus (Rabbit).